A 93-amino-acid chain; its full sequence is Pyrimidine/purine nucleoside phosphorylase (93 aa).

The protein belongs to the nucleoside phosphorylase PpnP family.

The enzyme catalyses a purine D-ribonucleoside + phosphate = a purine nucleobase + alpha-D-ribose 1-phosphate. It catalyses the reaction adenosine + phosphate = alpha-D-ribose 1-phosphate + adenine. It carries out the reaction cytidine + phosphate = cytosine + alpha-D-ribose 1-phosphate. The catalysed reaction is guanosine + phosphate = alpha-D-ribose 1-phosphate + guanine. The enzyme catalyses inosine + phosphate = alpha-D-ribose 1-phosphate + hypoxanthine. It catalyses the reaction thymidine + phosphate = 2-deoxy-alpha-D-ribose 1-phosphate + thymine. It carries out the reaction uridine + phosphate = alpha-D-ribose 1-phosphate + uracil. The catalysed reaction is xanthosine + phosphate = alpha-D-ribose 1-phosphate + xanthine. Functionally, catalyzes the phosphorolysis of diverse nucleosides, yielding D-ribose 1-phosphate and the respective free bases. Can use uridine, adenosine, guanosine, cytidine, thymidine, inosine and xanthosine as substrates. Also catalyzes the reverse reactions. In Vibrio vulnificus (strain CMCP6), this protein is Pyrimidine/purine nucleoside phosphorylase.